The following is a 253-amino-acid chain: Triosephosphate isomerase (253 aa).

Residue 9–11 (NWK) coordinates substrate. Residue His-97 is the Electrophile of the active site. Glu-169 serves as the catalytic Proton acceptor. Substrate is bound by residues Gly-175, Ser-215, and 236-237 (GG).

This sequence belongs to the triosephosphate isomerase family. Homodimer.

The protein resides in the cytoplasm. It catalyses the reaction D-glyceraldehyde 3-phosphate = dihydroxyacetone phosphate. It participates in carbohydrate biosynthesis; gluconeogenesis. Its pathway is carbohydrate degradation; glycolysis; D-glyceraldehyde 3-phosphate from glycerone phosphate: step 1/1. In terms of biological role, involved in the gluconeogenesis. Catalyzes stereospecifically the conversion of dihydroxyacetone phosphate (DHAP) to D-glyceraldehyde-3-phosphate (G3P). The polypeptide is Triosephosphate isomerase (Staphylococcus epidermidis (strain ATCC 35984 / DSM 28319 / BCRC 17069 / CCUG 31568 / BM 3577 / RP62A)).